A 335-amino-acid chain; its full sequence is 34 kDa spicule matrix protein (335 aa).

Positions 1 to 17 (MKGLLLILASLVAIATG) are cleaved as a signal peptide. The region spanning 29–194 (SGASCYRYFN…ATAMRAFVCE (166 aa)) is the C-type lectin domain. Cysteine 50 and cysteine 193 are joined by a disulfide. The segment at 199-335 (QNIPPGQQPG…QEAETDVTGS (137 aa)) is disordered. A compositionally biased stretch (gly residues) spans 207–310 (PGFGGQQPGF…GGPQRPGMGG (104 aa)). Low complexity predominate over residues 311-323 (QPNSPNPRFNRPR).

This sequence belongs to the SM50 family. In terms of tissue distribution, embryo spicule.

The protein localises to the secreted. Its function is as follows. Major matrix protein of the sea urchin embryo spicule which directs crystal growth in certain orientations and inhibit growth in others. In Lytechinus pictus (Painted sea urchin), this protein is 34 kDa spicule matrix protein.